A 138-amino-acid polypeptide reads, in one-letter code: MSSGVQPTQECLEKFQELKTGKKLTYVIYGLSEDKRSIVVLKASEDKDFDSFVAELPEKDCRWAVYDFEFTLPGGEGVRNKLCFIVWSPDDASVKNKMIFASSKEAIRRRLDGIHTEIQATDFSEITKDALFEKATRK.

Residues 2–136 form the ADF-H domain; it reads SSGVQPTQEC…TKDALFEKAT (135 aa).

It belongs to the actin-binding proteins ADF family.

The protein localises to the cytoplasm. Its subcellular location is the cytoskeleton. The protein resides in the nucleus matrix. Controls reversibly actin polymerization and depolymerization in a pH-sensitive manner. It has the ability to bind G- and F-actin in a 1:1 ratio of cofilin to actin. Binding to F-actin is regulated by tropomyosin. It is the major component of intranuclear and cytoplasmic actin rods. Required for accumulation of actin at the cell division site via depolymerizing actin at the cell ends. In association with myosin II has a role in the assembly of the contractile ring via severing actin filaments. Involved in the maintenance of the contractile ring once formed. In association with profilin and capping protein, has a role in the mitotic reorganization of the actin cytoskeleton. The sequence is that of Cofilin (COF1) from Cryptococcus neoformans var. neoformans serotype D (strain B-3501A) (Filobasidiella neoformans).